A 173-amino-acid chain; its full sequence is Large ribosomal subunit protein uL10 (173 aa).

Belongs to the universal ribosomal protein uL10 family. As to quaternary structure, part of the ribosomal stalk of the 50S ribosomal subunit. The N-terminus interacts with L11 and the large rRNA to form the base of the stalk. The C-terminus forms an elongated spine to which L12 dimers bind in a sequential fashion forming a multimeric L10(L12)X complex.

Forms part of the ribosomal stalk, playing a central role in the interaction of the ribosome with GTP-bound translation factors. This is Large ribosomal subunit protein uL10 from Cupriavidus metallidurans (strain ATCC 43123 / DSM 2839 / NBRC 102507 / CH34) (Ralstonia metallidurans).